Reading from the N-terminus, the 552-residue chain is Glycosyltransferase family 92 protein RCOM_0530710 (552 aa).

The chain crosses the membrane as a helical; Signal-anchor span at residues 12–34 (WNRFFWCTLLLVLSCVLFTASTF). Residues 277-520 (KPHEMCICTM…GTRAVEPPDW (244 aa)) form the GT92 domain.

It belongs to the glycosyltransferase 92 family.

Its subcellular location is the membrane. The sequence is that of Glycosyltransferase family 92 protein RCOM_0530710 from Ricinus communis (Castor bean).